The chain runs to 430 residues: Trigger factor (430 aa).

The PPIase FKBP-type domain maps to 163-248 (GNIAIIDFKG…IKDIKVKELP (86 aa)).

The protein belongs to the FKBP-type PPIase family. Tig subfamily.

It is found in the cytoplasm. It carries out the reaction [protein]-peptidylproline (omega=180) = [protein]-peptidylproline (omega=0). Functionally, involved in protein export. Acts as a chaperone by maintaining the newly synthesized protein in an open conformation. Functions as a peptidyl-prolyl cis-trans isomerase. This Clostridium botulinum (strain Kyoto / Type A2) protein is Trigger factor.